The primary structure comprises 310 residues: tRNA uridine(34) hydroxylase (310 aa).

In terms of domain architecture, Rhodanese spans 127 to 225 (KNQNTIVIDT…YLDEISKEEN (99 aa)). Catalysis depends on Cys-185, which acts as the Cysteine persulfide intermediate.

This sequence belongs to the TrhO family.

The catalysed reaction is uridine(34) in tRNA + AH2 + O2 = 5-hydroxyuridine(34) in tRNA + A + H2O. Its function is as follows. Catalyzes oxygen-dependent 5-hydroxyuridine (ho5U) modification at position 34 in tRNAs. This Prochlorococcus marinus (strain MIT 9215) protein is tRNA uridine(34) hydroxylase.